We begin with the raw amino-acid sequence, 400 residues long: Homoserine O-acetyltransferase (400 aa).

A compositionally biased stretch (polar residues) spans methionine 1–alanine 11. The interval methionine 1–proline 24 is disordered. Positions histidine 13–histidine 23 are enriched in basic and acidic residues. The AB hydrolase-1 domain maps to asparagine 64 to leucine 373. Serine 169 functions as the Nucleophile in the catalytic mechanism. Arginine 239 provides a ligand contact to substrate. Active-site residues include aspartate 335 and histidine 368. Aspartate 369 provides a ligand contact to substrate.

It belongs to the AB hydrolase superfamily. MetX family. As to quaternary structure, homodimer.

The protein resides in the cytoplasm. The catalysed reaction is L-homoserine + acetyl-CoA = O-acetyl-L-homoserine + CoA. Its pathway is amino-acid biosynthesis; L-methionine biosynthesis via de novo pathway; O-acetyl-L-homoserine from L-homoserine: step 1/1. Its function is as follows. Transfers an acetyl group from acetyl-CoA to L-homoserine, forming acetyl-L-homoserine. This chain is Homoserine O-acetyltransferase, found in Rhodopseudomonas palustris (strain BisB18).